The following is a 277-amino-acid chain: NAD kinase (277 aa).

The active-site Proton acceptor is the Asp-55. NAD(+) contacts are provided by residues Asp-55–Gly-56, Asn-131–Glu-132, Arg-157, Asp-159, and Thr-170–Ser-175.

The protein belongs to the NAD kinase family. A divalent metal cation serves as cofactor.

Its subcellular location is the cytoplasm. It catalyses the reaction NAD(+) + ATP = ADP + NADP(+) + H(+). In terms of biological role, involved in the regulation of the intracellular balance of NAD and NADP, and is a key enzyme in the biosynthesis of NADP. Catalyzes specifically the phosphorylation on 2'-hydroxyl of the adenosine moiety of NAD to yield NADP. The chain is NAD kinase from Streptococcus mutans serotype c (strain ATCC 700610 / UA159).